The following is a 413-amino-acid chain: Multidrug resistance protein MdtA (413 aa).

The first 20 residues, Met-1 to Ala-20, serve as a signal peptide directing secretion. Disordered stretches follow at residues Ser-31–Pro-57 and Glu-391–Ala-413. The span at Pro-32 to Gly-49 shows a compositional bias: low complexity. The segment covering Ala-397–Ala-413 has biased composition (basic and acidic residues).

Belongs to the membrane fusion protein (MFP) (TC 8.A.1) family. In terms of assembly, part of a tripartite efflux system composed of MdtA, MdtB and MdtC.

It localises to the cell inner membrane. The protein is Multidrug resistance protein MdtA of Salmonella typhi.